The chain runs to 99 residues: Integration host factor subunit alpha (99 aa).

A disordered region spans residues 49-72; it reads FGNFDLRDKNQRPGRNPKTGEDIP.

It belongs to the bacterial histone-like protein family. Heterodimer of an alpha and a beta chain.

Its function is as follows. This protein is one of the two subunits of integration host factor, a specific DNA-binding protein that functions in genetic recombination as well as in transcriptional and translational control. The polypeptide is Integration host factor subunit alpha (Escherichia coli O9:H4 (strain HS)).